The chain runs to 361 residues: DNA double-strand break repair protein Mre11 (361 aa).

The Mn(2+) site is built by D7, H9, D48, and N83. H84 acts as the Proton donor in catalysis. Mn(2+) is bound by residues H176, H204, and H206.

Belongs to the MRE11/RAD32 family. In terms of assembly, homodimer. Forms a heterotetramer composed of two Mre11 subunits and two Rad50 subunits. Mn(2+) is required as a cofactor.

Nuclease activity is regulated by Rad50. Its function is as follows. Part of the Rad50/Mre11 complex, which is involved in the early steps of DNA double-strand break (DSB) repair. The complex may facilitate opening of the processed DNA ends to aid in the recruitment of HerA and NurA. Mre11 binds to DSB ends and has both double-stranded 3'-5' exonuclease activity and single-stranded endonuclease activity. The sequence is that of DNA double-strand break repair protein Mre11 from Nanoarchaeum equitans (strain Kin4-M).